The sequence spans 176 residues: MSMEYQERYVRKVATILSSKTKHTTGCLIEGESDVCLEFQIELINALQDNHGLVYHLDFNDYTSETDCLAALKKARKQLRSNKQDGKTLFLSLASFERVEKKTMDAVKILIGSRSLGINLVVSANKRFVHLVGLTEYLVTMNKSDVVLSELYRYSTQKILASLKNENVSWGEANES.

This is an uncharacterized protein from Bacillus anthracis.